A 328-amino-acid polypeptide reads, in one-letter code: Biotin synthase (328 aa).

In terms of domain architecture, Radical SAM core spans 48–277; that stretch reads FVGNEVHLCS…GKRITVCGGR (230 aa). Positions 66, 70, and 73 each coordinate [4Fe-4S] cluster. 2 residues coordinate [2Fe-2S] cluster: Ser142 and Cys202.

Belongs to the radical SAM superfamily. Biotin synthase family. As to quaternary structure, homodimer. The cofactor is [4Fe-4S] cluster. [2Fe-2S] cluster serves as cofactor.

The enzyme catalyses (4R,5S)-dethiobiotin + (sulfur carrier)-SH + 2 reduced [2Fe-2S]-[ferredoxin] + 2 S-adenosyl-L-methionine = (sulfur carrier)-H + biotin + 2 5'-deoxyadenosine + 2 L-methionine + 2 oxidized [2Fe-2S]-[ferredoxin]. It participates in cofactor biosynthesis; biotin biosynthesis; biotin from 7,8-diaminononanoate: step 2/2. Its function is as follows. Catalyzes the conversion of dethiobiotin (DTB) to biotin by the insertion of a sulfur atom into dethiobiotin via a radical-based mechanism. This is Biotin synthase from Citrifermentans bemidjiense (strain ATCC BAA-1014 / DSM 16622 / JCM 12645 / Bem) (Geobacter bemidjiensis).